The primary structure comprises 483 residues: Glutamyl-tRNA(Gln) amidotransferase subunit A (483 aa).

Residues K76 and S151 each act as charge relay system in the active site. Residue S175 is the Acyl-ester intermediate of the active site.

The protein belongs to the amidase family. GatA subfamily. Heterotrimer of A, B and C subunits.

It carries out the reaction L-glutamyl-tRNA(Gln) + L-glutamine + ATP + H2O = L-glutaminyl-tRNA(Gln) + L-glutamate + ADP + phosphate + H(+). Its function is as follows. Allows the formation of correctly charged Gln-tRNA(Gln) through the transamidation of misacylated Glu-tRNA(Gln) in organisms which lack glutaminyl-tRNA synthetase. The reaction takes place in the presence of glutamine and ATP through an activated gamma-phospho-Glu-tRNA(Gln). The sequence is that of Glutamyl-tRNA(Gln) amidotransferase subunit A from Pseudomonas fluorescens (strain Pf0-1).